A 217-amino-acid chain; its full sequence is Glutathione S-transferase 1 (217 aa).

A GST N-terminal domain is found at 1-83 (MVMTLYKLDA…YLVSKYGADD (83 aa)). Glutathione contacts are provided by residues S11, 53 to 55 (HTV), and 67 to 69 (DSH). Residues 89–211 (DPKKRAIVDQ…APGNDLCKDL (123 aa)) enclose the GST C-terminal domain.

This sequence belongs to the GST superfamily. Theta family. Homodimer.

The catalysed reaction is RX + glutathione = an S-substituted glutathione + a halide anion + H(+). In terms of biological role, conjugation of reduced glutathione to a wide number of exogenous and endogenous hydrophobic electrophiles. The protein is Glutathione S-transferase 1 (GST1) of Manduca sexta (Tobacco hawkmoth).